The following is a 66-amino-acid chain: Large ribosomal subunit protein bL35 (66 aa).

This sequence belongs to the bacterial ribosomal protein bL35 family.

The polypeptide is Large ribosomal subunit protein bL35 (Bradyrhizobium diazoefficiens (strain JCM 10833 / BCRC 13528 / IAM 13628 / NBRC 14792 / USDA 110)).